We begin with the raw amino-acid sequence, 261 residues long: MTRQTHAYHMVNPSPWPLTGALSALLMTSGLIMWFHFNSTILLMLGLTTNMLTMYQWWRDVIRESTFQGHHTPNVQKGLRYGMILFIISEVLFFTGFFWAFYHSSLAPTPELGGCWPPTGIHPLNPLEVPLLNTSVLLASGVSITWAHHSLMEGNRNHMLQALFITIALGVYFTLLQASEYYEAPFTISDGVYGSTFFVATGFHGLHVIIGSTFLIVCFFRQLKFHFTSNHHFGFEAAAWYWHFVDVVWLFLYVSIYWWGS.

At 1 to 15 the chain is on the mitochondrial matrix side; that stretch reads MTRQTHAYHMVNPSP. The chain crosses the membrane as a helical span at residues 16–34; it reads WPLTGALSALLMTSGLIMW. The Mitochondrial intermembrane segment spans residues 35–40; it reads FHFNST. Residues 41-66 traverse the membrane as a helical segment; sequence ILLMLGLTTNMLTMYQWWRDVIREST. Over 67–72 the chain is Mitochondrial matrix; that stretch reads FQGHHT. The chain crosses the membrane as a helical span at residues 73-105; sequence PNVQKGLRYGMILFIISEVLFFTGFFWAFYHSS. Over 106-128 the chain is Mitochondrial intermembrane; it reads LAPTPELGGCWPPTGIHPLNPLE. The helical transmembrane segment at 129 to 152 threads the bilayer; it reads VPLLNTSVLLASGVSITWAHHSLM. Over 153-155 the chain is Mitochondrial matrix; that stretch reads EGN. A helical transmembrane segment spans residues 156–183; it reads RNHMLQALFITIALGVYFTLLQASEYYE. Over 184–190 the chain is Mitochondrial intermembrane; it reads APFTISD. A helical membrane pass occupies residues 191–223; sequence GVYGSTFFVATGFHGLHVIIGSTFLIVCFFRQL. Topologically, residues 224-232 are mitochondrial matrix; the sequence is KFHFTSNHH. The chain crosses the membrane as a helical span at residues 233–256; sequence FGFEAAAWYWHFVDVVWLFLYVSI. Residues 257-261 are Mitochondrial intermembrane-facing; sequence YWWGS.

This sequence belongs to the cytochrome c oxidase subunit 3 family. In terms of assembly, component of the cytochrome c oxidase (complex IV, CIV), a multisubunit enzyme composed of 14 subunits. The complex is composed of a catalytic core of 3 subunits MT-CO1, MT-CO2 and MT-CO3, encoded in the mitochondrial DNA, and 11 supernumerary subunits COX4I, COX5A, COX5B, COX6A, COX6B, COX6C, COX7A, COX7B, COX7C, COX8 and NDUFA4, which are encoded in the nuclear genome. The complex exists as a monomer or a dimer and forms supercomplexes (SCs) in the inner mitochondrial membrane with NADH-ubiquinone oxidoreductase (complex I, CI) and ubiquinol-cytochrome c oxidoreductase (cytochrome b-c1 complex, complex III, CIII), resulting in different assemblies (supercomplex SCI(1)III(2)IV(1) and megacomplex MCI(2)III(2)IV(2)).

It is found in the mitochondrion inner membrane. The catalysed reaction is 4 Fe(II)-[cytochrome c] + O2 + 8 H(+)(in) = 4 Fe(III)-[cytochrome c] + 2 H2O + 4 H(+)(out). Its function is as follows. Component of the cytochrome c oxidase, the last enzyme in the mitochondrial electron transport chain which drives oxidative phosphorylation. The respiratory chain contains 3 multisubunit complexes succinate dehydrogenase (complex II, CII), ubiquinol-cytochrome c oxidoreductase (cytochrome b-c1 complex, complex III, CIII) and cytochrome c oxidase (complex IV, CIV), that cooperate to transfer electrons derived from NADH and succinate to molecular oxygen, creating an electrochemical gradient over the inner membrane that drives transmembrane transport and the ATP synthase. Cytochrome c oxidase is the component of the respiratory chain that catalyzes the reduction of oxygen to water. Electrons originating from reduced cytochrome c in the intermembrane space (IMS) are transferred via the dinuclear copper A center (CU(A)) of subunit 2 and heme A of subunit 1 to the active site in subunit 1, a binuclear center (BNC) formed by heme A3 and copper B (CU(B)). The BNC reduces molecular oxygen to 2 water molecules using 4 electrons from cytochrome c in the IMS and 4 protons from the mitochondrial matrix. This Eudorcas rufifrons (Red-fronted gazelle) protein is Cytochrome c oxidase subunit 3 (MT-CO3).